The following is a 151-amino-acid chain: SsrA-binding protein (151 aa).

Positions 124–151 (GKKLHDKRESEKERDWNRQKSRLLKAHG) are disordered. A compositionally biased stretch (basic and acidic residues) spans 129–141 (DKRESEKERDWNR). Positions 142–151 (QKSRLLKAHG) are enriched in basic residues.

It belongs to the SmpB family.

It localises to the cytoplasm. Required for rescue of stalled ribosomes mediated by trans-translation. Binds to transfer-messenger RNA (tmRNA), required for stable association of tmRNA with ribosomes. tmRNA and SmpB together mimic tRNA shape, replacing the anticodon stem-loop with SmpB. tmRNA is encoded by the ssrA gene; the 2 termini fold to resemble tRNA(Ala) and it encodes a 'tag peptide', a short internal open reading frame. During trans-translation Ala-aminoacylated tmRNA acts like a tRNA, entering the A-site of stalled ribosomes, displacing the stalled mRNA. The ribosome then switches to translate the ORF on the tmRNA; the nascent peptide is terminated with the 'tag peptide' encoded by the tmRNA and targeted for degradation. The ribosome is freed to recommence translation, which seems to be the essential function of trans-translation. This is SsrA-binding protein from Rhizobium johnstonii (strain DSM 114642 / LMG 32736 / 3841) (Rhizobium leguminosarum bv. viciae).